Here is a 257-residue protein sequence, read N- to C-terminus: 3-methyl-2-oxobutanoate hydroxymethyltransferase (257 aa).

Asp42 and Asp86 together coordinate Mg(2+). Residues 42 to 43, Asp86, and Lys116 contribute to the 3-methyl-2-oxobutanoate site; that span reads DS. Residue Glu118 participates in Mg(2+) binding. Catalysis depends on Glu185, which acts as the Proton acceptor.

The protein belongs to the PanB family. Homodecamer; pentamer of dimers. Requires Mg(2+) as cofactor.

The protein localises to the cytoplasm. It catalyses the reaction 3-methyl-2-oxobutanoate + (6R)-5,10-methylene-5,6,7,8-tetrahydrofolate + H2O = 2-dehydropantoate + (6S)-5,6,7,8-tetrahydrofolate. It functions in the pathway cofactor biosynthesis; (R)-pantothenate biosynthesis; (R)-pantoate from 3-methyl-2-oxobutanoate: step 1/2. Its function is as follows. Catalyzes the reversible reaction in which hydroxymethyl group from 5,10-methylenetetrahydrofolate is transferred onto alpha-ketoisovalerate to form ketopantoate. The protein is 3-methyl-2-oxobutanoate hydroxymethyltransferase of Prochlorococcus marinus subsp. pastoris (strain CCMP1986 / NIES-2087 / MED4).